The following is a 224-amino-acid chain: Response regulator protein GraR (224 aa).

In terms of domain architecture, Response regulatory spans Q2–Y115. At D51 the chain carries 4-aspartylphosphate. The segment at residues K126 to E224 is a DNA-binding region (ompR/PhoB-type). A phosphothreonine mark is found at T128, T130, and T149.

Interacts with GraX. In terms of processing, phosphorylated by GraS. Phosphorylated by Stk1; phosphorylation increases the DNA-binding activity of GraR.

It is found in the cytoplasm. In terms of biological role, member of the two-component regulatory system GraR/GraS involved in resistance against cationic antimicrobial peptides (CAMPs). Upon phosphorylation by GraS, functions as a transcription regulator by direct binding to promoter regions of target genes such as adhesins, exoproteins, transporters, toxins, and proteins involved in cell wall synthesis. Down-regulates the expression of many genes involved in RNA and amino acid synthesis or glycolysis. The sequence is that of Response regulator protein GraR (graR) from Staphylococcus aureus (strain USA300).